The chain runs to 90 residues: Co-chaperonin GroES (90 aa).

It belongs to the GroES chaperonin family. As to quaternary structure, heptamer of 7 subunits arranged in a ring. Interacts with the chaperonin GroEL.

The protein resides in the cytoplasm. Together with the chaperonin GroEL, plays an essential role in assisting protein folding. The GroEL-GroES system forms a nano-cage that allows encapsulation of the non-native substrate proteins and provides a physical environment optimized to promote and accelerate protein folding. GroES binds to the apical surface of the GroEL ring, thereby capping the opening of the GroEL channel. The chain is Co-chaperonin GroES from Bacteroides fragilis (strain ATCC 25285 / DSM 2151 / CCUG 4856 / JCM 11019 / LMG 10263 / NCTC 9343 / Onslow / VPI 2553 / EN-2).